The primary structure comprises 682 residues: MNSNLRKKVTLAGLLVSIGIVYGDIGTSPLYVMKAIVNENGGIAHVSREYIVGSISLILWTITLLTTVKYVLIALKATNHGEGGIFSLYALVRKKAKWLVIPALVGGAALLADGTLTPAVTVTTAIEGLKNMKFGNDIPVPNQNSVIMITIVILLFLFSIQRMGTSIIGKTFGPIMLVWFTFLGLTGIMNLSHDWSLLEALNPLLAVKILFSPANKVGVLILGAVFLATTGAEALYSDVGHVGKGNIMGSWPYVFICLALNYLGQGVWILENPNYHAGATDFNPFFEALPSQWKFFAIILATLAAIIASQALITGSFTLVSEASGLKFLPRMKIIYPSTEQGQLFIPSINKMLCAATIGIVFLFRTSEHMEAAYGLAITVTMLMTTVLLFEYLSLRKVNLSLRLVFLLLFGAIETMFLISSLAKFLHGGYVTVIIAAFIGAIMYIWYFGNKIRDKREAENAYVRLDEFTTMLSNLSHDESIPLYATNLVYMAKVKYNKFIKRDMLYSILDKRPKRAHAYWFVTVNVTNEPFTAEYAVNTYGTKNVINVQLYLGFKQQQKVNVYLRQIVHDLIKDGTIESQPQEYTTTPGRDVGDFSFVIVNDVISPQTQLRSYEKFLVEARVWLQNLSSNPASWFGLDYADTVIERVPLILGNQRRQHITRIAPKKFEDIKKKLQAEGELKE.

Helical transmembrane passes span 13 to 33 (GLLV…LYVM), 55 to 75 (ISLI…LIAL), 98 to 118 (WLVI…TLTP), 138 to 158 (IPVP…LFLF), 171 to 191 (TFGP…IMNL), 217 to 237 (VGVL…ALYS), 250 to 270 (SWPY…VWIL), 295 to 315 (FFAI…LITG), 344 to 364 (LFIP…VFLF), 375 to 395 (GLAI…YLSL), 405 to 425 (VFLL…LAKF), and 428 to 448 (GGYV…IWYF).

This sequence belongs to the HAK/KUP transporter (TC 2.A.72) family.

The protein resides in the cell membrane. It catalyses the reaction K(+)(in) + H(+)(in) = K(+)(out) + H(+)(out). Functionally, transport of potassium into the cell. Likely operates as a K(+):H(+) symporter. The protein is Probable potassium transport system protein Kup of Lactobacillus gasseri (strain ATCC 33323 / DSM 20243 / BCRC 14619 / CIP 102991 / JCM 1131 / KCTC 3163 / NCIMB 11718 / NCTC 13722 / AM63).